Here is a 559-residue protein sequence, read N- to C-terminus: Formate--tetrahydrofolate ligase (559 aa).

Thr-68 to Thr-75 is an ATP binding site.

Belongs to the formate--tetrahydrofolate ligase family.

The catalysed reaction is (6S)-5,6,7,8-tetrahydrofolate + formate + ATP = (6R)-10-formyltetrahydrofolate + ADP + phosphate. It functions in the pathway one-carbon metabolism; tetrahydrofolate interconversion. In Rhizobium rhizogenes (strain K84 / ATCC BAA-868) (Agrobacterium radiobacter), this protein is Formate--tetrahydrofolate ligase.